The primary structure comprises 186 residues: Elongation factor P (186 aa).

The protein belongs to the elongation factor P family.

Its subcellular location is the cytoplasm. It participates in protein biosynthesis; polypeptide chain elongation. Involved in peptide bond synthesis. Stimulates efficient translation and peptide-bond synthesis on native or reconstituted 70S ribosomes in vitro. Probably functions indirectly by altering the affinity of the ribosome for aminoacyl-tRNA, thus increasing their reactivity as acceptors for peptidyl transferase. The protein is Elongation factor P of Streptococcus gordonii (strain Challis / ATCC 35105 / BCRC 15272 / CH1 / DL1 / V288).